The sequence spans 574 residues: Cytochrome P450 306a1 (574 aa).

Positions 303 to 314 are enriched in basic and acidic residues; the sequence is EKEQLRQSKEAD. Residues 303–333 are disordered; it reads EKEQLRQSKEADPSQEQSEADEDDEESDEED. The span at 320–333 shows a compositional bias: acidic residues; it reads SEADEDDEESDEED. C505 is a heme binding site.

It belongs to the cytochrome P450 family. Heme serves as cofactor. As to expression, first seen at the early (syncytial) blastoderm stage 4. During cellularization of the blastoderm (stage 5), stripes of expression appear and remain through to stage 10. Expression becomes undetectable during germ band retraction (stages 11-14). By stage 15, some expression resumes in the primordium of the ring gland, so that by stage 17 strong expression is seen, but only in the ring gland. This specific localization continues throughout the larval instars (at protein level). Expressed in the prothoracic gland cells of the larval ring gland (RG). Levels decline just after the molt to the third instar then increase later during the wandering stage. Low levels of expression are seen in the larval brain and fat body. In the adult, majority of expression is restricted to the ovaries, with low levels in the head and carcass of both sexes.

It localises to the endoplasmic reticulum membrane. It is found in the microsome membrane. The enzyme catalyses 2,22,25-trideoxyecdysone + 2 reduced [adrenodoxin] + O2 + 2 H(+) = 2,22-dideoxyecdysone + 2 oxidized [adrenodoxin] + H2O. The protein operates within steroid biosynthesis; ecdysteroid biosynthesis. Involved in the metabolism of insect hormones; responsible for ecdysteroid C25-hydroxylase activity. May be involved in the breakdown of synthetic insecticides. The polypeptide is Cytochrome P450 306a1 (Drosophila melanogaster (Fruit fly)).